The following is a 522-amino-acid chain: F-box only protein 7 (522 aa).

2 disordered regions span residues 1–20 (MKLR…PESE) and 85–128 (PNLP…HGQV). The ubiquitin-like stretch occupies residues 1 to 88 (MKLRVRLQKR…EDEMPAPNLP (88 aa)). The span at 87–114 (LPSSTDSEHSSLQNNDQPPLAATSSQAN) shows a compositional bias: polar residues. Positions 92–129 (DSEHSSLQNNDQPPLAATSSQANIPDEQGSDSSHGQVT) are important for interaction with PINK1. The segment at 129–169 (TQYDAWTDDSMEGPSHSAEAVSIQDAMSVEEASGFHPLEPM) is important for interaction with CDK6. The interval 180–324 (PHSLEALYQS…PLLAFTRQVL (145 aa)) is important for dimerization and interaction with PSMF1. Residues 329-375 (VFGLVVLPLELKLRIFRLLDVHSVLALSAVCHDLLIASNDPLLWRCL) enclose the F-box domain. Residues 381–522 (RDSTIRGPDT…RSADNRLPYL (142 aa)) are important for interaction with CDK6. 2 positions are modified to omega-N-methylarginine: R431 and R451. The disordered stretch occupies residues 459 to 522 (DPVTSLIPRP…RSADNRLPYL (64 aa)). The RFDP motif signature appears at 481-484 (RFDP). Asymmetric dimethylarginine is present on R518.

Part of the SCF (SKP1-CUL1-F-box) E3 ubiquitin-protein ligase complex SCF(FBXO7) formed of CUL1, SKP1, RBX1 and FBXO7. Interacts via its C-terminal proline-rich region with DLGAP5. Interacts with BIRC2. Interacts with CDK6 and promotes its interaction with D-type cyclin. Interacts (via the N-terminal Ubl domain) with PRKN. Interacts (via N-terminal region) with PINK1. Interacts with PSMF1.

It localises to the cytoplasm. Its subcellular location is the nucleus. It is found in the mitochondrion. The protein resides in the cytosol. It participates in protein modification; protein ubiquitination. In terms of biological role, substrate recognition component of a SCF (SKP1-CUL1-F-box protein) E3 ubiquitin-protein ligase complex which mediates the ubiquitination and subsequent proteasomal degradation of target proteins and plays a role in several biological processes such as cell cycle, cell proliferation, or maintenance of chromosome stability. Recognizes and ubiquitinates BIRC2 and the cell cycle regulator DLGAP5. Plays a role downstream of PINK1 in the clearance of damaged mitochondria via selective autophagy (mitophagy) by targeting PRKN to dysfunctional depolarized mitochondria. Promotes MFN1 ubiquitination. Mediates the ubiquitination and proteasomal degradation of UXT isoform 2, thereby impairing the NF-kappa-B signaling pathway. Inhibits NF-kappa-B pathway also by promoting the ubiquitinatioin of TRAF2. Affects the assembly state and activity of the proteasome in the cells including neurons by ubiquitinating the proteasomal subunit PSMA2 via 'Lys-63'-linked polyubiquitin chains. Promotes 'Lys-48'-linked polyubiquitination SIRT7, leading to the hydrogen peroxide-induced cell death. The protein is F-box only protein 7 (Fbxo7) of Rattus norvegicus (Rat).